We begin with the raw amino-acid sequence, 448 residues long: Tryptophan dimethylallyltransferase 2 (448 aa).

L-tryptophan-binding positions include 80-81 and E89; that span reads IL. Residues R100, K186, and Y188 each contribute to the substrate site. 2 residues coordinate L-tryptophan: Y190 and R249. R262, K264, Y266, Q348, Y350, Y414, and Y418 together coordinate substrate.

This sequence belongs to the tryptophan dimethylallyltransferase family. Homodimer.

The catalysed reaction is L-tryptophan + dimethylallyl diphosphate = 4-(3-methylbut-2-enyl)-L-tryptophan + diphosphate. Its pathway is alkaloid biosynthesis; ergot alkaloid biosynthesis. In terms of biological role, catalyzes the first step of ergot alkaloid biosynthesis. Ergot alkaloids, which are produced by endophyte fungi, can enhance plant host fitness, but also cause livestock toxicosis to host plants. The sequence is that of Tryptophan dimethylallyltransferase 2 (dmaW2) from Claviceps purpurea (strain 20.1) (Ergot fungus).